The sequence spans 292 residues: Elongation factor Ts (292 aa).

The involved in Mg(2+) ion dislocation from EF-Tu stretch occupies residues 81-84 (TDFV).

Belongs to the EF-Ts family.

Its subcellular location is the cytoplasm. Its function is as follows. Associates with the EF-Tu.GDP complex and induces the exchange of GDP to GTP. It remains bound to the aminoacyl-tRNA.EF-Tu.GTP complex up to the GTP hydrolysis stage on the ribosome. The polypeptide is Elongation factor Ts (Alkalilimnicola ehrlichii (strain ATCC BAA-1101 / DSM 17681 / MLHE-1)).